Here is a 198-residue protein sequence, read N- to C-terminus: Na(+)-translocating NADH-quinone reductase subunit E (198 aa).

6 consecutive transmembrane segments (helical) span residues 11–31, 39–59, 77–97, 109–129, 140–160, and 176–196; these read AVFI…FLAV, FGLG…NNLV, FLNF…LEMI, LGIF…VSFM, IVYG…LASI, and LGVT…FSGV.

It belongs to the NqrDE/RnfAE family. As to quaternary structure, composed of six subunits; NqrA, NqrB, NqrC, NqrD, NqrE and NqrF.

It localises to the cell inner membrane. The enzyme catalyses a ubiquinone + n Na(+)(in) + NADH + H(+) = a ubiquinol + n Na(+)(out) + NAD(+). NQR complex catalyzes the reduction of ubiquinone-1 to ubiquinol by two successive reactions, coupled with the transport of Na(+) ions from the cytoplasm to the periplasm. NqrA to NqrE are probably involved in the second step, the conversion of ubisemiquinone to ubiquinol. The polypeptide is Na(+)-translocating NADH-quinone reductase subunit E (Proteus mirabilis (strain HI4320)).